Consider the following 493-residue polypeptide: 3-octaprenyl-4-hydroxybenzoate carboxy-lyase (493 aa).

Asn-172 serves as a coordination point for Mn(2+). Prenylated FMN-binding positions include 175–177 (IYR), 189–191 (RWL), and 194–195 (RG). Residue Glu-238 coordinates Mn(2+). Asp-287 serves as the catalytic Proton donor.

It belongs to the UbiD family. In terms of assembly, homohexamer. Prenylated FMN is required as a cofactor. Mn(2+) serves as cofactor.

The protein localises to the cell membrane. It catalyses the reaction a 4-hydroxy-3-(all-trans-polyprenyl)benzoate + H(+) = a 2-(all-trans-polyprenyl)phenol + CO2. It participates in cofactor biosynthesis; ubiquinone biosynthesis. In terms of biological role, catalyzes the decarboxylation of 3-octaprenyl-4-hydroxy benzoate to 2-octaprenylphenol, an intermediate step in ubiquinone biosynthesis. In Shewanella baltica (strain OS195), this protein is 3-octaprenyl-4-hydroxybenzoate carboxy-lyase.